The primary structure comprises 562 residues: MKPHSVFADSLWPSIDLLYDYAPFLQQSMVDGHIGFFPTGITPPRVAIIGAGISGLIAATELLRAGVRDITLFEARDRLGGRAWSQLFDPHYYPRLIAEMGAMRFPPSATGLFHYLNRFSIQTSASFPDPGIVDTELHYRGVRHLWPAGEQPPALFTRVHNGWRALLYEGCLLDGVSLVGPLQITAMLKSERFDEAAEAWQIWLNVFRDCSFYSAMVTIFTGTNPPGGIAWERRDDFELFGALGIGSGGFLPVYQAGFTEILRMVINGYEDDQRLIIGGISTLAEQLARQEIRGTTPGRHVRFSKVNRISKDNGKISLATDVKPVDAFDRVIVTSNNRAMQMVHGLSADETFLNQDVCRAVRETHLTGSSKLFMLTRDKFWLKNKLPLTIQSDGLVRGVYVLDYESDNPEGRGVVLLSYTWEDDAHKLLAITDKKQRGQHLVDELSAIHPEFARYLVPAGADYERYVLHHDWLTDPCSAGAFKLNYPGEDVYSQRLFFQFKTANHPEQDSGLLLAGCGCSFTGGWVEGAVQTAVNSACAVIRSTGGTLYGNPLDSVHSIYDY.

The FMN site is built by Ser54, Glu74, Arg76, Arg82, and Arg104. Position 104 (Arg104) interacts with substrate.

Belongs to the tryptophan 2-monooxygenase family. The cofactor is FMN.

The enzyme catalyses L-tryptophan + O2 = indole-3-acetamide + CO2 + H2O. The protein operates within plant hormone metabolism; auxin biosynthesis. The chain is Tryptophan 2-monooxygenase (iaaM) from Pantoea agglomerans pv. gypsophilae (Erwinia herbicola).